The chain runs to 576 residues: Calcium-dependent protein kinase 11 (576 aa).

Gly-2 carries N-myristoyl glycine lipidation. The disordered stretch occupies residues Pro-27–Arg-88. A compositionally biased stretch (low complexity) spans Ala-41–Glu-56. In terms of domain architecture, Protein kinase spans Tyr-113–Val-371. ATP-binding positions include Leu-119 to Thr-127 and Lys-142. Asp-237 acts as the Proton acceptor in catalysis. Residues Ala-377–Ile-407 form an autoinhibitory domain region. EF-hand domains are found at residues Glu-414–Asn-449, Leu-450–Val-485, Glu-486–Gly-521, and Asp-522–Ala-555. 20 residues coordinate Ca(2+): Asp-427, Asp-429, Ser-431, His-433, Glu-438, Asp-463, Asp-465, Ser-467, Thr-469, Glu-474, Asp-499, Asp-501, Ser-503, Tyr-505, Glu-510, Asp-533, Asp-535, Asp-537, Arg-539, and Glu-544.

This sequence belongs to the protein kinase superfamily. Ser/Thr protein kinase family. CDPK subfamily.

It localises to the membrane. It carries out the reaction L-seryl-[protein] + ATP = O-phospho-L-seryl-[protein] + ADP + H(+). The enzyme catalyses L-threonyl-[protein] + ATP = O-phospho-L-threonyl-[protein] + ADP + H(+). With respect to regulation, activated by calcium. Autophosphorylation may play an important role in the regulation of the kinase activity. In terms of biological role, may play a role in signal transduction pathways that involve calcium as a second messenger. The chain is Calcium-dependent protein kinase 11 from Oryza sativa subsp. japonica (Rice).